A 530-amino-acid polypeptide reads, in one-letter code: Phosphoenolpyruvate carboxykinase (ATP) (530 aa).

The substrate site is built by Arg57, Tyr193, and Lys199. Residues Lys199, His218, and 234-242 each bind ATP; that span reads GLSGTGKTT. Mn(2+) contacts are provided by Lys199 and His218. A Mn(2+)-binding site is contributed by Asp255. The ATP site is built by Glu283, Arg320, and Thr445. A substrate-binding site is contributed by Arg320.

It belongs to the phosphoenolpyruvate carboxykinase (ATP) family. Mn(2+) is required as a cofactor.

Its subcellular location is the cytoplasm. The catalysed reaction is oxaloacetate + ATP = phosphoenolpyruvate + ADP + CO2. It functions in the pathway carbohydrate biosynthesis; gluconeogenesis. In terms of biological role, involved in the gluconeogenesis. Catalyzes the conversion of oxaloacetate (OAA) to phosphoenolpyruvate (PEP) through direct phosphoryl transfer between the nucleoside triphosphate and OAA. This Leptospira biflexa serovar Patoc (strain Patoc 1 / Ames) protein is Phosphoenolpyruvate carboxykinase (ATP).